The chain runs to 120 residues: Ribosome-binding factor A (120 aa).

Belongs to the RbfA family. Monomer. Binds 30S ribosomal subunits, but not 50S ribosomal subunits or 70S ribosomes.

The protein localises to the cytoplasm. Functionally, one of several proteins that assist in the late maturation steps of the functional core of the 30S ribosomal subunit. Associates with free 30S ribosomal subunits (but not with 30S subunits that are part of 70S ribosomes or polysomes). Required for efficient processing of 16S rRNA. May interact with the 5'-terminal helix region of 16S rRNA. The chain is Ribosome-binding factor A from Chlamydia felis (strain Fe/C-56) (Chlamydophila felis).